The chain runs to 741 residues: MYPVNLKLSIKFLFYFFLYFLLIIIIYGVYLYFKINQVIHGKIWKFPISIYSRIVTLEPGNNYSKKDIIAILKSNRYKQVNFLTMPGEFLVKRNSLILIRRSFNFPEGFEDKISIKLLFDKNKLVRIVHLSNNRNFSILRLDPQLIAMIYSPKGEKRLFVSQKNYPKALIQTLLTIEDKCFYNHYGINFYSMFRAFFVNLISGHSIQGGSTLTQQLVKNLFLTNIRSLWRKINEIYMALILDFQYSKEKILELYLNEVYLGQDKNEQIRGFALASLYYFGRPINELRLDECALLVGMVKGASLYNPWNNPVLTLNRRNLVLYVLFKHKVINRTLYEKLKSKPLNIQSRGNIIWFRSAFVQIVEKEFQKKVGYYFQNFSGIKIFTTLDLISQIAAENAIRHGIQQLKKKYKLQDLEASMVIIDRFSGEIRGVLGSSNPNLLGYNRAIQAKRSIGSLSKPITYLAALSQPEYFRLNTWIPDTPIKIKMQNGKLWKPQNNNFEFVGKVMLIDALKNSMNVPIVHLSMKLGLKKIVQTWIQLGLSSNHIFKYPSIALGSINLTSMEVAKIFQVISSGGNKANIISIRSVLSENNKLIYHSFPQSKQVISAQASYLTLYAMQSVVSSGTAKHLGKFFKNMHLAGKTGTTNNLVDSWFVGIDGRQVVIVWIGRDNNKTTKCYGSTGAMKIYHNYLKLNNPKPLLLIPPRDVYFLNINKSGDFMCFRSYSKYFRAIPVWIRNHNIFCT.

The Cytoplasmic segment spans residues 1 to 12 (MYPVNLKLSIKF). A helical; Signal-anchor for type II membrane protein membrane pass occupies residues 13 to 33 (LFYFFLYFLLIIIIYGVYLYF). At 34–741 (KINQVIHGKI…WIRNHNIFCT (708 aa)) the chain is on the extracellular side. The segment at 139 to 311 (LRLDPQLIAM…SLYNPWNNPV (173 aa)) is transglycosylase. Catalysis depends on Glu177, which acts as the Proton donor; for transglycosylase activity. The tract at residues 395-687 (ENAIRHGIQQ…STGAMKIYHN (293 aa)) is transpeptidase. Residue Ser454 is the Acyl-ester intermediate; for transpeptidase activity of the active site.

This sequence in the N-terminal section; belongs to the glycosyltransferase 51 family. It in the C-terminal section; belongs to the transpeptidase family.

The protein resides in the cell membrane. It catalyses the reaction [GlcNAc-(1-&gt;4)-Mur2Ac(oyl-L-Ala-gamma-D-Glu-L-Lys-D-Ala-D-Ala)](n)-di-trans,octa-cis-undecaprenyl diphosphate + beta-D-GlcNAc-(1-&gt;4)-Mur2Ac(oyl-L-Ala-gamma-D-Glu-L-Lys-D-Ala-D-Ala)-di-trans,octa-cis-undecaprenyl diphosphate = [GlcNAc-(1-&gt;4)-Mur2Ac(oyl-L-Ala-gamma-D-Glu-L-Lys-D-Ala-D-Ala)](n+1)-di-trans,octa-cis-undecaprenyl diphosphate + di-trans,octa-cis-undecaprenyl diphosphate + H(+). The catalysed reaction is Preferential cleavage: (Ac)2-L-Lys-D-Ala-|-D-Ala. Also transpeptidation of peptidyl-alanyl moieties that are N-acyl substituents of D-alanine.. It participates in cell wall biogenesis; peptidoglycan biosynthesis. Functionally, cell wall formation. Synthesis of cross-linked peptidoglycan from the lipid intermediates. The enzyme has a penicillin-insensitive transglycosylase N-terminal domain (formation of linear glycan strands) and a penicillin-sensitive transpeptidase C-terminal domain (cross-linking of the peptide subunits). In Buchnera aphidicola subsp. Baizongia pistaciae (strain Bp), this protein is Penicillin-binding protein 1B (mrcB).